Here is a 279-residue protein sequence, read N- to C-terminus: Thymidylate synthase (279 aa).

133–134 (RR) contacts dUMP. C154 functions as the Nucleophile in the catalytic mechanism. Residues 178–181 (RSND), N189, and 219–221 (HIY) contribute to the dUMP site. (6R)-5,10-methylene-5,6,7,8-tetrahydrofolate is bound at residue D181. A (6R)-5,10-methylene-5,6,7,8-tetrahydrofolate-binding site is contributed by A278.

It belongs to the thymidylate synthase family. Bacterial-type ThyA subfamily. In terms of assembly, homodimer.

The protein resides in the cytoplasm. It catalyses the reaction dUMP + (6R)-5,10-methylene-5,6,7,8-tetrahydrofolate = 7,8-dihydrofolate + dTMP. Its pathway is pyrimidine metabolism; dTTP biosynthesis. Functionally, catalyzes the reductive methylation of 2'-deoxyuridine-5'-monophosphate (dUMP) to 2'-deoxythymidine-5'-monophosphate (dTMP) while utilizing 5,10-methylenetetrahydrofolate (mTHF) as the methyl donor and reductant in the reaction, yielding dihydrofolate (DHF) as a by-product. This enzymatic reaction provides an intracellular de novo source of dTMP, an essential precursor for DNA biosynthesis. This chain is Thymidylate synthase, found in Streptococcus sanguinis (strain SK36).